A 666-amino-acid chain; its full sequence is Vicilin-like antimicrobial peptides 2-2 (666 aa).

An N-terminal signal peptide occupies residues 1–27 (MAINTSNLCSLLFLLSLFLLSTTVSLA). Disordered regions lie at residues 161–191 (QQKR…DPQQ) and 221–251 (RQHG…SDNP). Residues 239–251 (RYEEGEEKQSDNP) are compositionally biased toward basic and acidic residues. 2 consecutive Cupin type-1 domains span residues 271–410 (SVLE…ERLR) and 455–625 (YNLF…KEVE).

It belongs to the 7S seed storage protein family.

It localises to the secreted. In terms of biological role, antimicrobial peptides 2b, 2c and 2d have antibacterial and antifungal activity against a range of species. The protein is Vicilin-like antimicrobial peptides 2-2 of Macadamia integrifolia (Macadamia nut).